Reading from the N-terminus, the 68-residue chain is Alpha-conotoxin-like Ca1.2 (68 aa).

An N-terminal signal peptide occupies residues 1–21 (MGMRMMFTVFLLVVLATTVVS). The propeptide occupies 22 to 48 (FTSDRASEGRNAAAKDKASDLVALTVR). 2 disulfides stabilise this stretch: Cys-50–Cys-56 and Cys-51–Cys-64. A lacks the Ser-Xaa-Pro motif that is crucial for potent interaction with nAChR region spans residues 52–54 (AIR). Tyr-63 bears the Sulfotyrosine mark. The residue at position 64 (Cys-64) is a Cysteine amide. Residues 65 to 68 (GGIY) constitute a propeptide that is removed on maturation.

This sequence belongs to the conotoxin A superfamily. As to expression, expressed by the venom duct.

Its subcellular location is the secreted. Alpha-conotoxins act on postsynaptic membranes, they bind to the nicotinic acetylcholine receptors (nAChR) and thus inhibit them. Has possibly a distinct nAChR binding mode from other alpha-conotoxins, due to a different three residue motif (lacks the Ser-Xaa-Pro motif). The polypeptide is Alpha-conotoxin-like Ca1.2 (Conus caracteristicus (Characteristic cone)).